We begin with the raw amino-acid sequence, 489 residues long: NF-kappa-B inhibitor cactus (489 aa).

A compositionally biased stretch (low complexity) spans 1–26 (MPSPTKAAEAATKATATSDCSCSAAS). 2 disordered regions span residues 1-138 (MPSP…SMRL) and 163-203 (NNLG…APPS). The residue at position 45 (serine 45) is a Phosphoserine; by PKC. The span at 69–86 (NETSDSGFISGPQSSQIC) shows a compositional bias: polar residues. Serine 135 is modified (phosphoserine; by PKC). Residues 163-180 (NNLGQSSSTQITGRSKFQ) show a composition bias toward polar residues. Threonine 174 is modified (phosphothreonine; by PKC). Residues 181–203 (SSTASTANANPSGXGATSSAPPS) are compositionally biased toward low complexity. ANK repeat units lie at residues 220–252 (DGDTPXHLACISGSVEVVAALIRMAPHPCLLNI), 256–285 (VAQTPLHLAALTAQPNIMRILLLAGAEVRD), 287–316 (HGNTALHLSCIAGEKQCVRALTEEFGATEI), 350–379 (DGERCVHLAAEAGHIDILRILVSHGADINA), and 384–413 (SGRTPLHIAIEGCNEDLANFLLDECEKLNL). Phosphothreonine; by PKC is present on threonine 308. Serine 384 is modified (phosphoserine; by PKC).

The protein localises to the cytoplasm. Its function is as follows. Involved in the formation of the dorsoventral pattern. It inhibits nuclear translocation of the dorsal morphogen in the dorsal region of the embryo. In Drosophila yakuba (Fruit fly), this protein is NF-kappa-B inhibitor cactus (cact).